The primary structure comprises 611 residues: Chaperone protein DnaK (611 aa).

Residue threonine 173 is modified to Phosphothreonine; by autocatalysis. A compositionally biased stretch (low complexity) spans 579-592; the sequence is AAGQAEGAQGAQDA. The segment at 579-598 is disordered; sequence AAGQAEGAQGAQDAGAKKDN.

The protein belongs to the heat shock protein 70 family.

Functionally, acts as a chaperone. The chain is Chaperone protein DnaK from Bacillus cereus (strain ATCC 10987 / NRS 248).